Here is a 224-residue protein sequence, read N- to C-terminus: MEKLLCFLVLTSLSHAFGQTDMSRKAFVFPKESDTSYVSLKAPLTKPLKAFTVCLHFYTELSSTRGYSIFSYATKRQDNEILIFWSKDIGYSFTVGGSEILFEVPEVTVAPVHICTSWESASGIVEFWVDGKPRVRKSLKKGYTVGAEASIILGQEQDSFGGNFEGSQSLVGDIGNVNMWDFVLSPDEINTIYLGGPFSPNVLNWRALKYEVQGEVFTKPQLWP.

Residues 1–18 form the signal peptide; the sequence is MEKLLCFLVLTSLSHAFG. Residue Gln19 is modified to Pyrrolidone carboxylic acid. A Pentraxin (PTX) domain is found at 23 to 224; that stretch reads SRKAFVFPKE…EVFTKPQLWP (202 aa). Residues Cys54 and Cys115 are joined by a disulfide bond. Ca(2+) contacts are provided by Asp78, Asn79, Glu156, Gln157, Asp158, and Gln168.

It belongs to the pentraxin family. As to quaternary structure, homopentamer. Pentraxin (or pentaxin) have a discoid arrangement of 5 non-covalently bound subunits. Interacts with FCN1; may regulate monocyte activation by FCN1. Ca(2+) is required as a cofactor. Found in plasma.

The protein resides in the secreted. Displays several functions associated with host defense: it promotes agglutination, bacterial capsular swelling, phagocytosis and complement fixation through its calcium-dependent binding to phosphorylcholine. Can interact with DNA and histones and may scavenge nuclear material released from damaged circulating cells. The polypeptide is C-reactive protein (CRP) (Homo sapiens (Human)).